The chain runs to 1028 residues: Ubiquitin conjugation factor E4 A (1028 aa).

A disordered region spans residues 33–57 (KEQLKQQSDELPASPDDSDNSVSES). Lys-386 is modified (N6-acetyllysine). One can recognise a U-box domain in the interval 949–1023 (DACDEFLDPI…QRWLAERKQQ (75 aa)).

The protein belongs to the ubiquitin conjugation factor E4 family. In terms of tissue distribution, expressed in liver, heart, brain, kidney and testis.

The protein localises to the cytoplasm. It carries out the reaction S-ubiquitinyl-[E2 ubiquitin-conjugating enzyme]-L-cysteine + [acceptor protein]-L-lysine = [E2 ubiquitin-conjugating enzyme]-L-cysteine + N(6)-ubiquitinyl-[acceptor protein]-L-lysine.. It functions in the pathway protein modification; protein ubiquitination. Ubiquitin-protein ligase that probably functions as an E3 ligase in conjunction with specific E1 and E2 ligases. May also function as an E4 ligase mediating the assembly of polyubiquitin chains on substrates ubiquitinated by another E3 ubiquitin ligase. Mediates 'Lys-48'-linked polyubiquitination of substrates. The sequence is that of Ubiquitin conjugation factor E4 A from Mus musculus (Mouse).